We begin with the raw amino-acid sequence, 237 residues long: Large ribosomal subunit protein uL1 (237 aa).

This sequence belongs to the universal ribosomal protein uL1 family. As to quaternary structure, part of the 50S ribosomal subunit.

Functionally, binds directly to 23S rRNA. The L1 stalk is quite mobile in the ribosome, and is involved in E site tRNA release. Its function is as follows. Protein L1 is also a translational repressor protein, it controls the translation of the L11 operon by binding to its mRNA. This Rickettsia typhi (strain ATCC VR-144 / Wilmington) protein is Large ribosomal subunit protein uL1.